Here is a 273-residue protein sequence, read N- to C-terminus: Light-independent protochlorophyllide reductase iron-sulfur ATP-binding protein (273 aa).

ATP contacts are provided by residues 12 to 17 (GIGKST) and K41. A Mg(2+)-binding site is contributed by S16. [4Fe-4S] cluster is bound by residues C97 and C131. 182 to 183 (NR) is an ATP binding site.

It belongs to the NifH/BchL/ChlL family. As to quaternary structure, homodimer. Protochlorophyllide reductase is composed of three subunits; BchL, BchN and BchB. It depends on [4Fe-4S] cluster as a cofactor.

The enzyme catalyses chlorophyllide a + oxidized 2[4Fe-4S]-[ferredoxin] + 2 ADP + 2 phosphate = protochlorophyllide a + reduced 2[4Fe-4S]-[ferredoxin] + 2 ATP + 2 H2O. It participates in porphyrin-containing compound metabolism; bacteriochlorophyll biosynthesis (light-independent). Component of the dark-operative protochlorophyllide reductase (DPOR) that uses Mg-ATP and reduced ferredoxin to reduce ring D of protochlorophyllide (Pchlide) to form chlorophyllide a (Chlide). This reaction is light-independent. The L component serves as a unique electron donor to the NB-component of the complex, and binds Mg-ATP. This Roseiflexus castenholzii (strain DSM 13941 / HLO8) protein is Light-independent protochlorophyllide reductase iron-sulfur ATP-binding protein.